Consider the following 552-residue polypeptide: Phosphoglucomutase (552 aa).

The active-site Phosphoserine intermediate is the Ser-143. Mg(2+)-binding residues include Ser-143, Asp-295, Asp-297, and Asp-299.

The protein belongs to the phosphohexose mutase family. The cofactor is Mg(2+).

The catalysed reaction is alpha-D-glucose 1-phosphate = alpha-D-glucose 6-phosphate. It functions in the pathway glycolipid metabolism; diglucosyl-diacylglycerol biosynthesis. Functionally, catalyzes the interconversion between glucose-6-phosphate and alpha-glucose-1-phosphate. This is the first step in the biosynthesis of diglucosyl-diacylglycerol (Glc2-DAG), i.e. the predominant glycolipid found in the S.aureus membrane, which is also used as a membrane anchor for lipoteichoic acid (LTA). This chain is Phosphoglucomutase (pgcA), found in Staphylococcus aureus (strain MSSA476).